Reading from the N-terminus, the 736-residue chain is MATEGMILTNHDHQIRVGVLTVSDSCFRNLAEDRSGINLKDLVQDPSLLGGTISAYKIVPDEIEEIKETLIDWCDEKELNLILTTGGTGFAPRDVTPEATKEVIEREAPGMALAMLMGSLNVTPLGMLSRPVCGIRGKTLIINLPGSKKGSQECFQFILPALPHAIDLLRDAIVKVKEVHDELEDLPSPPPPLSPPPTTSPHKQTEDKGVQCEEEEEEKKDSGVASTEDSSSSHITAAAIAAKIPDSIISRGVQVLPRDTASLSTTPSESPRAQATSRLSTASCPTPKVQSRCSSKENILRASHSAVDITKVARRHRMSPFPLTSMDKAFITVLEMTPVLGTEIINYRDGMGRVLAQDVYAKDNLPPFPASVKDGYAVRAADGPGDRFIIGESQAGEQPTQTVMPGQVMRVTTGAPIPCGADAVVQVEDTELIRESDDGTEELEVRILVQARPGQDIRPIGHDIKRGECVLAKGTHMGPSEIGLLATVGVTEVEVNKFPVVAVMSTGNELLNPEDDLLPGKIRDSNRSTLLATIQEHGYPTINLGIVGDNPDDLLNALNEGISRADVIITSGGVSMGEKDYLKQVLDIDLHAQIHFGRVFMKPGLPTTFATLDIDGVRKIIFALPGNPVSAVVTCNLFVVPALRKMQGILDPRPTIIKARLSCDVKLDPRPEYHRCILTWHHQEPLPWAQSTGNQMSSRLMSMRSANGLLMLPPKTEQYVELHKGEVVDVMVIGRL.

The MPT Mo-transferase stretch occupies residues 14–166; it reads QIRVGVLTVS…FILPALPHAI (153 aa). Residues 140-316 are interaction with GABARAP; the sequence is LIINLPGSKK…VDITKVARRH (177 aa). Disordered regions lie at residues 181–232 and 260–290; these read DELE…DSSS and TASLSTTPSESPRAQATSRLSTASCPTPKVQ. Positions 187–199 are enriched in pro residues; the sequence is PSPPPPLSPPPTT. 2 positions are modified to phosphoserine: Ser188 and Ser194. Thr198 is subject to Phosphothreonine. The residue at position 200 (Ser200) is a Phosphoserine. Residue Cys212 is the site of S-palmitoyl cysteine attachment. Positions 261–290 are enriched in polar residues; sequence ASLSTTPSESPRAQATSRLSTASCPTPKVQ. Ser262 carries the post-translational modification Phosphoserine. 2 positions are modified to phosphothreonine: Thr265 and Thr266. 2 positions are modified to phosphoserine: Ser268 and Ser270. A lipid anchor (S-palmitoyl cysteine) is attached at Cys284. Position 305 is a phosphoserine (Ser305). The MPT adenylyltransferase stretch occupies residues 326–736; it reads MDKAFITVLE…VVDVMVIGRL (411 aa).

The protein in the N-terminal section; belongs to the MoaB/Mog family. It in the C-terminal section; belongs to the MoeA family. In terms of assembly, homotrimer, homodimer and homooligomer. Interacts with GABARAP. Interacts with SRGAP2 (via SH3 domain). Interacts with GABRA3. Interacts with GLRB. GABRA3 and GLRB occupy overlapping binding sites. Interacts with ARHGAP32; IQSEC3, INSYN1 and INSYN2A. Requires Mg(2+) as cofactor. Palmitoylated. Palmitoylation is stimulated by GABA type A receptors activity. Palmitoylation by ZDHHC12 regulates clustering at synapses.

It is found in the postsynaptic cell membrane. The protein localises to the cell membrane. It localises to the cytoplasm. Its subcellular location is the cytosol. The protein resides in the cytoskeleton. It is found in the cell projection. The protein localises to the dendrite. It localises to the postsynaptic density. It carries out the reaction molybdopterin + ATP + H(+) = adenylyl-molybdopterin + diphosphate. It catalyses the reaction adenylyl-molybdopterin + molybdate = Mo-molybdopterin + AMP + H(+). Its pathway is cofactor biosynthesis; molybdopterin biosynthesis. With respect to regulation, inhibited by copper and tungsten. Microtubule-associated protein involved in membrane protein-cytoskeleton interactions. It is thought to anchor the inhibitory glycine receptor (GLYR) to subsynaptic microtubules. Acts as a major instructive molecule at inhibitory synapses, where it also clusters GABA type A receptors. Functionally, also has a catalytic activity and catalyzes two steps in the biosynthesis of the molybdenum cofactor. In the first step, molybdopterin is adenylated. Subsequently, molybdate is inserted into adenylated molybdopterin and AMP is released. In Homo sapiens (Human), this protein is Gephyrin.